A 540-amino-acid chain; its full sequence is Glucose-6-phosphate isomerase (540 aa).

Residue Glu346 is the Proton donor of the active site. Active-site residues include His377 and Lys505.

The protein belongs to the GPI family.

It is found in the cytoplasm. The catalysed reaction is alpha-D-glucose 6-phosphate = beta-D-fructose 6-phosphate. Its pathway is carbohydrate biosynthesis; gluconeogenesis. It participates in carbohydrate degradation; glycolysis; D-glyceraldehyde 3-phosphate and glycerone phosphate from D-glucose: step 2/4. Functionally, catalyzes the reversible isomerization of glucose-6-phosphate to fructose-6-phosphate. This Francisella tularensis subsp. tularensis (strain SCHU S4 / Schu 4) protein is Glucose-6-phosphate isomerase.